We begin with the raw amino-acid sequence, 386 residues long: Phosphoglycerate kinase (386 aa).

Substrate-binding positions include 21–23 (DLN), Arg-36, 59–62 (HLGR), Arg-113, and Arg-146. ATP is bound by residues Lys-197, Glu-314, and 340–343 (GGDT).

Belongs to the phosphoglycerate kinase family. Monomer.

It localises to the cytoplasm. The catalysed reaction is (2R)-3-phosphoglycerate + ATP = (2R)-3-phospho-glyceroyl phosphate + ADP. The protein operates within carbohydrate degradation; glycolysis; pyruvate from D-glyceraldehyde 3-phosphate: step 2/5. The polypeptide is Phosphoglycerate kinase (Marinobacter nauticus (strain ATCC 700491 / DSM 11845 / VT8) (Marinobacter aquaeolei)).